A 525-amino-acid polypeptide reads, in one-letter code: GMP synthase [glutamine-hydrolyzing] (525 aa).

Positions 8–206 constitute a Glutamine amidotransferase type-1 domain; sequence PLLILDFGSQ…VVDICKAPTE (199 aa). Cys-85 acts as the Nucleophile in catalysis. Residues His-180 and Glu-182 contribute to the active site. The GMPS ATP-PPase domain maps to 207–400; sequence WTPEHIIDEA…LGLPHDMVYR (194 aa). Position 234-240 (234-240) interacts with ATP; that stretch reads SGGVDSS.

As to quaternary structure, homodimer.

It carries out the reaction XMP + L-glutamine + ATP + H2O = GMP + L-glutamate + AMP + diphosphate + 2 H(+). It functions in the pathway purine metabolism; GMP biosynthesis; GMP from XMP (L-Gln route): step 1/1. Catalyzes the synthesis of GMP from XMP. This Legionella pneumophila (strain Corby) protein is GMP synthase [glutamine-hydrolyzing].